The chain runs to 331 residues: Cathepsin S (331 aa).

Positions 1 to 16 (MKRLVCVLLVCSSAVA) are cleaved as a signal peptide. Residues 17–114 (QLHKDPTLDH…ITYKSNPNRI (98 aa)) constitute a propeptide, activation peptide. N-linked (GlcNAc...) asparagine glycosylation is present at Asn-104. 4 disulfides stabilise this stretch: Cys-126/Cys-224, Cys-136/Cys-180, Cys-170/Cys-213, and Cys-272/Cys-320. Cys-139 is an active-site residue. Catalysis depends on residues His-278 and Asn-298.

Belongs to the peptidase C1 family. Monomer.

It is found in the lysosome. The protein resides in the secreted. The protein localises to the cytoplasmic vesicle. Its subcellular location is the phagosome. The enzyme catalyses Similar to cathepsin L, but with much less activity on Z-Phe-Arg-|-NHMec, and more activity on the Z-Val-Val-Arg-|-Xaa compound.. Its function is as follows. Thiol protease. Key protease responsible for the removal of the invariant chain from MHC class II molecules and MHC class II antigen presentation. The bond-specificity of this proteinase is in part similar to the specificities of cathepsin L. This is Cathepsin S (CTSS) from Homo sapiens (Human).